Consider the following 62-residue polypeptide: Photosystem II reaction center protein Z (62 aa).

2 consecutive transmembrane segments (helical) span residues 8–28 (AVFA…VVFA) and 41–61 (FSGT…NSLI).

It belongs to the PsbZ family. In terms of assembly, PSII is composed of 1 copy each of membrane proteins PsbA, PsbB, PsbC, PsbD, PsbE, PsbF, PsbH, PsbI, PsbJ, PsbK, PsbL, PsbM, PsbT, PsbY, PsbZ, Psb30/Ycf12, at least 3 peripheral proteins of the oxygen-evolving complex and a large number of cofactors. It forms dimeric complexes.

It is found in the plastid. Its subcellular location is the chloroplast thylakoid membrane. Functionally, may control the interaction of photosystem II (PSII) cores with the light-harvesting antenna, regulates electron flow through the 2 photosystem reaction centers. PSII is a light-driven water plastoquinone oxidoreductase, using light energy to abstract electrons from H(2)O, generating a proton gradient subsequently used for ATP formation. In Coffea arabica (Arabian coffee), this protein is Photosystem II reaction center protein Z.